The following is a 188-amino-acid chain: MSESRQGYKRHGARYKARRRAVDILFEAESRDVDPVAIIDDRKTLSNAVDPVVAPVAEYTEAIINGVAVELDTIDDLLSEHIADTWLLERLPSVDRAVLRVACWEMLYNPDVPVTTAVVEAVEIASQYSTDKAGAYINATLDNMASKVDELRERAANPGAVSGSDAPVAPWDDSEELPAEDEAEDSRP.

Residues 154-188 (RAANPGAVSGSDAPVAPWDDSEELPAEDEAEDSRP) are disordered. Residues 172 to 188 (DDSEELPAEDEAEDSRP) are compositionally biased toward acidic residues.

Belongs to the NusB family.

Functionally, involved in transcription antitermination. Required for transcription of ribosomal RNA (rRNA) genes. Binds specifically to the boxA antiterminator sequence of the ribosomal RNA (rrn) operons. This is Transcription antitermination protein NusB from Corynebacterium efficiens (strain DSM 44549 / YS-314 / AJ 12310 / JCM 11189 / NBRC 100395).